We begin with the raw amino-acid sequence, 1095 residues long: Putative disease resistance protein At4g11170 (1095 aa).

Residues 9-173 (WRYDVFPSFR…TISKDVLEKL (165 aa)) enclose the TIR domain. Residue glutamate 84 is part of the active site. Residues 168–454 (DVLEKLNATP…HENYLKQMII (287 aa)) form the NB-ARC domain. 6 LRR repeats span residues 609-631 (CLVELNMSHSKLKKLWSGVQPLR), 632-654 (NLRTMNLNSSRNLEILPNLMEAT), 655-677 (KLNRLDLGWCESLVELPSSIKNL), 679-701 (HLILLEMSCCKKLEIIPTNINLP), 702-722 (SLEVLHFRYCTRLQTFPEIST), and 723-744 (NIRLLNLIGTAITEVPPSVKYW).

It catalyses the reaction NAD(+) + H2O = ADP-D-ribose + nicotinamide + H(+). The polypeptide is Putative disease resistance protein At4g11170 (Arabidopsis thaliana (Mouse-ear cress)).